The chain runs to 313 residues: Formimidoylglutamase (313 aa).

Mn(2+)-binding residues include H130, D155, H157, D159, D241, and D243.

The protein belongs to the arginase family. The cofactor is Mn(2+).

The enzyme catalyses N-formimidoyl-L-glutamate + H2O = formamide + L-glutamate. It participates in amino-acid degradation; L-histidine degradation into L-glutamate; L-glutamate from N-formimidoyl-L-glutamate (hydrolase route): step 1/1. Catalyzes the conversion of N-formimidoyl-L-glutamate to L-glutamate and formamide. This Salmonella schwarzengrund (strain CVM19633) protein is Formimidoylglutamase.